We begin with the raw amino-acid sequence, 557 residues long: Dihydroxy-acid dehydratase (557 aa).

A [2Fe-2S] cluster-binding site is contributed by Cys-47. Asp-79 contacts Mg(2+). Residue Cys-120 participates in [2Fe-2S] cluster binding. Positions 121 and 122 each coordinate Mg(2+). Lys-122 carries the post-translational modification N6-carboxylysine. Cys-192 is a [2Fe-2S] cluster binding site. Glu-444 contacts Mg(2+). The Proton acceptor role is filled by Ser-470.

This sequence belongs to the IlvD/Edd family. As to quaternary structure, homodimer. [2Fe-2S] cluster is required as a cofactor. It depends on Mg(2+) as a cofactor.

The catalysed reaction is (2R)-2,3-dihydroxy-3-methylbutanoate = 3-methyl-2-oxobutanoate + H2O. The enzyme catalyses (2R,3R)-2,3-dihydroxy-3-methylpentanoate = (S)-3-methyl-2-oxopentanoate + H2O. It participates in amino-acid biosynthesis; L-isoleucine biosynthesis; L-isoleucine from 2-oxobutanoate: step 3/4. The protein operates within amino-acid biosynthesis; L-valine biosynthesis; L-valine from pyruvate: step 3/4. Its function is as follows. Functions in the biosynthesis of branched-chain amino acids. Catalyzes the dehydration of (2R,3R)-2,3-dihydroxy-3-methylpentanoate (2,3-dihydroxy-3-methylvalerate) into 2-oxo-3-methylpentanoate (2-oxo-3-methylvalerate) and of (2R)-2,3-dihydroxy-3-methylbutanoate (2,3-dihydroxyisovalerate) into 2-oxo-3-methylbutanoate (2-oxoisovalerate), the penultimate precursor to L-isoleucine and L-valine, respectively. The sequence is that of Dihydroxy-acid dehydratase from Synechococcus sp. (strain CC9902).